Consider the following 198-residue polypeptide: Recombination protein RecR (198 aa).

Residues 57–72 (CAQCRTLTEHSLCEYC) form a C4-type zinc finger. The Toprim domain maps to 80–175 (SLLCIVESPA…RTTRIAHGIP (96 aa)).

Belongs to the RecR family.

May play a role in DNA repair. It seems to be involved in an RecBC-independent recombinational process of DNA repair. It may act with RecF and RecO. This is Recombination protein RecR from Methylococcus capsulatus (strain ATCC 33009 / NCIMB 11132 / Bath).